Reading from the N-terminus, the 89-residue chain is Small ribosomal subunit protein bS16 (89 aa).

Belongs to the bacterial ribosomal protein bS16 family.

This Nitrosomonas europaea (strain ATCC 19718 / CIP 103999 / KCTC 2705 / NBRC 14298) protein is Small ribosomal subunit protein bS16.